A 370-amino-acid chain; its full sequence is Probable dual-specificity RNA methyltransferase RlmN (370 aa).

Glutamate 91 functions as the Proton acceptor in the catalytic mechanism. Residues 97-329 (QHYGLSVCVT…KKNGVNCVVR (233 aa)) form the Radical SAM core domain. Cysteines 104 and 340 form a disulfide. [4Fe-4S] cluster is bound by residues cysteine 111, cysteine 115, and cysteine 118. Residues 163–164 (GE), serine 195, 218–220 (SLH), and asparagine 296 contribute to the S-adenosyl-L-methionine site. Catalysis depends on cysteine 340, which acts as the S-methylcysteine intermediate.

This sequence belongs to the radical SAM superfamily. RlmN family. The cofactor is [4Fe-4S] cluster.

The protein localises to the cytoplasm. It catalyses the reaction adenosine(2503) in 23S rRNA + 2 reduced [2Fe-2S]-[ferredoxin] + 2 S-adenosyl-L-methionine = 2-methyladenosine(2503) in 23S rRNA + 5'-deoxyadenosine + L-methionine + 2 oxidized [2Fe-2S]-[ferredoxin] + S-adenosyl-L-homocysteine. The catalysed reaction is adenosine(37) in tRNA + 2 reduced [2Fe-2S]-[ferredoxin] + 2 S-adenosyl-L-methionine = 2-methyladenosine(37) in tRNA + 5'-deoxyadenosine + L-methionine + 2 oxidized [2Fe-2S]-[ferredoxin] + S-adenosyl-L-homocysteine. Its function is as follows. Specifically methylates position 2 of adenine 2503 in 23S rRNA and position 2 of adenine 37 in tRNAs. This Streptococcus suis (strain 98HAH33) protein is Probable dual-specificity RNA methyltransferase RlmN.